Here is a 333-residue protein sequence, read N- to C-terminus: Mitochondrial fission regulator 1 (333 aa).

The residue at position 119 (S119) is a Phosphoserine. Over residues 286–307 the composition is skewed to basic and acidic residues; that stretch reads YRSDSQDEVEKGVPKSESEATS. The disordered stretch occupies residues 286 to 315; sequence YRSDSQDEVEKGVPKSESEATSERVLFGPH.

This sequence belongs to the MTFR1 family.

The protein resides in the mitochondrion. In terms of biological role, may play a role in mitochondrial aerobic respiration. May also regulate mitochondrial organization and fission. The sequence is that of Mitochondrial fission regulator 1 (MTFR1) from Pongo abelii (Sumatran orangutan).